A 282-amino-acid chain; its full sequence is 4-deoxy-L-threo-5-hexosulose-uronate ketol-isomerase 2 (282 aa).

4 residues coordinate Zn(2+): H200, H202, E207, and H249.

Belongs to the KduI family. Requires Zn(2+) as cofactor.

The enzyme catalyses 5-dehydro-4-deoxy-D-glucuronate = 3-deoxy-D-glycero-2,5-hexodiulosonate. It functions in the pathway glycan metabolism; pectin degradation; 2-dehydro-3-deoxy-D-gluconate from pectin: step 4/5. Its function is as follows. Catalyzes the isomerization of 5-dehydro-4-deoxy-D-glucuronate to 3-deoxy-D-glycero-2,5-hexodiulosonate. This is 4-deoxy-L-threo-5-hexosulose-uronate ketol-isomerase 2 (kduI2) from Rhizobium meliloti (strain 1021) (Ensifer meliloti).